The primary structure comprises 496 residues: Putative aldehyde dehydrogenase-like protein C922.07c (496 aa).

241 to 246 (GSTKVG) is a binding site for NAD(+). Glu-263 serves as the catalytic Proton acceptor. The active-site Nucleophile is the Cys-297.

This sequence belongs to the aldehyde dehydrogenase family.

The protein resides in the cytoplasm. It localises to the nucleus. This chain is Putative aldehyde dehydrogenase-like protein C922.07c, found in Schizosaccharomyces pombe (strain 972 / ATCC 24843) (Fission yeast).